Reading from the N-terminus, the 472-residue chain is Argininosuccinate lyase (472 aa).

This sequence belongs to the lyase 1 family. Argininosuccinate lyase subfamily.

The protein localises to the cytoplasm. The enzyme catalyses 2-(N(omega)-L-arginino)succinate = fumarate + L-arginine. It participates in amino-acid biosynthesis; L-arginine biosynthesis; L-arginine from L-ornithine and carbamoyl phosphate: step 3/3. The polypeptide is Argininosuccinate lyase (Mycobacterium avium (strain 104)).